A 101-amino-acid polypeptide reads, in one-letter code: Urease subunit beta (101 aa).

This sequence belongs to the urease beta subunit family. Heterotrimer of UreA (gamma), UreB (beta) and UreC (alpha) subunits. Three heterotrimers associate to form the active enzyme.

It is found in the cytoplasm. The enzyme catalyses urea + 2 H2O + H(+) = hydrogencarbonate + 2 NH4(+). The protein operates within nitrogen metabolism; urea degradation; CO(2) and NH(3) from urea (urease route): step 1/1. This is Urease subunit beta from Paraburkholderia xenovorans (strain LB400).